Here is a 239-residue protein sequence, read N- to C-terminus: Ubiquinone biosynthesis O-methyltransferase (239 aa).

Positions 45, 64, 85, and 129 each coordinate S-adenosyl-L-methionine.

Belongs to the methyltransferase superfamily. UbiG/COQ3 family.

The catalysed reaction is a 3-demethylubiquinol + S-adenosyl-L-methionine = a ubiquinol + S-adenosyl-L-homocysteine + H(+). It catalyses the reaction a 3-(all-trans-polyprenyl)benzene-1,2-diol + S-adenosyl-L-methionine = a 2-methoxy-6-(all-trans-polyprenyl)phenol + S-adenosyl-L-homocysteine + H(+). It participates in cofactor biosynthesis; ubiquinone biosynthesis. O-methyltransferase that catalyzes the 2 O-methylation steps in the ubiquinone biosynthetic pathway. This Nitrosospira multiformis (strain ATCC 25196 / NCIMB 11849 / C 71) protein is Ubiquinone biosynthesis O-methyltransferase.